The sequence spans 368 residues: Peptide chain release factor 2 (368 aa).

The residue at position 248 (Gln248) is an N5-methylglutamine.

It belongs to the prokaryotic/mitochondrial release factor family. In terms of processing, methylated by PrmC. Methylation increases the termination efficiency of RF2.

It localises to the cytoplasm. Functionally, peptide chain release factor 2 directs the termination of translation in response to the peptide chain termination codons UGA and UAA. This is Peptide chain release factor 2 from Corynebacterium glutamicum (strain R).